The chain runs to 256 residues: Hydroxyacylglutathione hydrolase (256 aa).

The Zn(2+) site is built by His58, His60, Asp62, His63, His116, Asp135, and His173.

The protein belongs to the metallo-beta-lactamase superfamily. Glyoxalase II family. As to quaternary structure, monomer. The cofactor is Zn(2+).

It catalyses the reaction an S-(2-hydroxyacyl)glutathione + H2O = a 2-hydroxy carboxylate + glutathione + H(+). Its pathway is secondary metabolite metabolism; methylglyoxal degradation; (R)-lactate from methylglyoxal: step 2/2. Its function is as follows. Thiolesterase that catalyzes the hydrolysis of S-D-lactoyl-glutathione to form glutathione and D-lactic acid. This Hyphomonas neptunium (strain ATCC 15444) protein is Hydroxyacylglutathione hydrolase.